The sequence spans 403 residues: MLSVSCPRVYMSRKALDFGQLASCRCRWAGRSGMRVAPRRRMPCVCFVASPSQPGLAAVDVPAEAISSARTTTMIPERISVSSLLEVVSDDLLKLNNNLKSLVGAENPVLVSAAEQIFGAGGKRLRPALVFLVSRATAELAGLLELTTEHQRLAEIIEMIHTASLIHDDVIDDSGMRRGKETIHQLYGTRVAVLAGDFMFAQSSWFLANLENIEVIKLISQVIKDFASGEIKQASTLFDCDVTLDDYLLKSYYKTASLLASSTRSAAIFSGVSTTICEQMYEYGRNLGLSFQVVDDILDFTQSAEQLGKPAGSDLAKGNLTAPVIFALQDEPKLREIIDSEFSESDSLATAIDLVHRSGGIRRAQELAKEKGDLALQNLQCLPKSQFRSTLENVVKYNLQRID.

The N-terminal 62 residues, methionine 1–proline 62, are a transit peptide targeting the chloroplast. The isopentenyl diphosphate site is built by lysine 123, arginine 126, and histidine 161. Residues aspartate 168 and aspartate 172 each contribute to the Mg(2+) site. Arginine 177 lines the an all-trans-polyprenyl diphosphate pocket. Residue arginine 178 coordinates isopentenyl diphosphate. 4 residues coordinate an all-trans-polyprenyl diphosphate: lysine 254, threonine 255, glutamine 292, and lysine 309.

The protein belongs to the FPP/GGPP synthase family. As to quaternary structure, homodimer. Interacts with FBN5. Mg(2+) serves as cofactor. As to expression, expressed in leaves, stems and roots. Highest expression in leaves and roots.

The protein localises to the plastid. It localises to the chloroplast. It carries out the reaction 7 isopentenyl diphosphate + (2E)-geranyl diphosphate = all-trans-nonaprenyl diphosphate + 7 diphosphate. Functionally, involved in providing solanesyl diphosphate for plastoquinone-9 (PQ-9) formation. Geranyl diphosphate is the preferred substrate. The chain is Solanesyl-diphosphate synthase 2, chloroplastic from Oryza sativa subsp. japonica (Rice).